Reading from the N-terminus, the 224-residue chain is PKHD-type hydroxylase tll1907 (224 aa).

One can recognise a Fe2OG dioxygenase domain in the interval 77–176 (KIIGPLLFSR…RLVAVAWVQS (100 aa)). The Fe cation site is built by histidine 96, aspartate 98, and histidine 157. Arginine 167 is a 2-oxoglutarate binding site.

Requires Fe(2+) as cofactor. L-ascorbate serves as cofactor.

The chain is PKHD-type hydroxylase tll1907 from Thermosynechococcus vestitus (strain NIES-2133 / IAM M-273 / BP-1).